Consider the following 261-residue polypeptide: Proteasome subunit alpha type-4 (261 aa).

Phosphoserine is present on residues Ser13 and Ser75. Lys127 carries the N6-acetyllysine modification. A Phosphoserine modification is found at Ser173. Lys176 carries the post-translational modification N6-acetyllysine. Residues 240–261 form a disordered region; it reads HEEEEAKAEREKKEKEQKEKDK.

It belongs to the peptidase T1A family. As to quaternary structure, the 26S proteasome consists of a 20S proteasome core and two 19S regulatory subunits. The 20S proteasome core is a barrel-shaped complex made of 28 subunits that are arranged in four stacked rings. The two outer rings are each formed by seven alpha subunits, and the two inner rings are formed by seven beta subunits. The proteolytic activity is exerted by three beta-subunits PSMB5, PSMB6 and PSMB7.

It localises to the cytoplasm. Its subcellular location is the nucleus. In terms of biological role, component of the 20S core proteasome complex involved in the proteolytic degradation of most intracellular proteins. This complex plays numerous essential roles within the cell by associating with different regulatory particles. Associated with two 19S regulatory particles, forms the 26S proteasome and thus participates in the ATP-dependent degradation of ubiquitinated proteins. The 26S proteasome plays a key role in the maintenance of protein homeostasis by removing misfolded or damaged proteins that could impair cellular functions, and by removing proteins whose functions are no longer required. Associated with the PA200 or PA28, the 20S proteasome mediates ubiquitin-independent protein degradation. This type of proteolysis is required in several pathways including spermatogenesis (20S-PA200 complex) or generation of a subset of MHC class I-presented antigenic peptides (20S-PA28 complex). The sequence is that of Proteasome subunit alpha type-4 (PSMA4) from Macaca fascicularis (Crab-eating macaque).